The sequence spans 317 residues: Ferrochelatase (317 aa).

Residues H184 and E259 each coordinate Fe cation.

It belongs to the ferrochelatase family.

Its subcellular location is the cytoplasm. The enzyme catalyses heme b + 2 H(+) = protoporphyrin IX + Fe(2+). It functions in the pathway porphyrin-containing compound metabolism; protoheme biosynthesis; protoheme from protoporphyrin-IX: step 1/1. Its function is as follows. Catalyzes the ferrous insertion into protoporphyrin IX. This chain is Ferrochelatase, found in Chlamydia muridarum (strain MoPn / Nigg).